The sequence spans 644 residues: MPEPHAVLYVTNELSHIVKSGFLPIWRLTGVESLNVLWLENGKYATDVYAYGDVSKWTIRQLRGHGFIFISTHKNIQLADIIKTVDVRIPREVAKSQDMKAFENEIGRRRIRMRKGFGDALRNKLFKMAIEFHGSEAETLNDANPRLHKIYGMPEMPPLYIEYAEIGTRFDDEPTDEKLVSMLDYIVYSAEEVHYVGCGDLRTIMQFKKRSPGRFRRVLWHVYHPIAPESSDPNVIVHNVMVDSKKDILKHMNFLKRVERLFIWDVSSDRSQMDDDEWESTRFAEDRLGEEIAYEMGGAFSSALIKHRIPNSRDEYHCISTYLLPQPGADADMYELRNFMRLKGYSHVDRHMHPDASVMKVVSRDVRKMVELYHGRDRGRFVKNRLFEHLHIVRKNGLLHESDEPRADLFYLTNRCNMGLEPSIYEVMKKSVIATAWVGRAPLYDYDDFALPRSTVMLNGSYHDIRILDGNGAILFLMWKYPDIVKKDLTYDHAWAMNFAVSLKEPIPDPPVPDISLCRFIGLRVESSVLRVRNPTLHETADELKRMGLDLSGHLYVTLMSGAYVTDLFWWFKMILDWSAQSKEQKLRDLKRSAAEVIEWKEQMAERPWHVRNSLIAALREYKRKMGIREGASIDSWLELLRHL.

This sequence belongs to the orbivirus VP4 family.

The protein localises to the virion. Its function is as follows. The VP4 protein is one of the five proteins (with VP1, VP3, VP6 and VP7) which form the inner capsid of the virus. The sequence is that of Core protein VP4 (Segment-4) from Bluetongue virus 2 (isolate USA) (BTV 2).